A 521-amino-acid polypeptide reads, in one-letter code: Type II methyltransferase M.AluI (521 aa).

The 484-residue stretch at 8 to 491 (YSFVDLFAGI…REHVRRDRAL (484 aa)) folds into the SAM-dependent MTase C5-type domain. The active site involves C84.

This sequence belongs to the class I-like SAM-binding methyltransferase superfamily. C5-methyltransferase family.

The catalysed reaction is a 2'-deoxycytidine in DNA + S-adenosyl-L-methionine = a 5-methyl-2'-deoxycytidine in DNA + S-adenosyl-L-homocysteine + H(+). Functionally, a methylase, recognizes the double-stranded sequence 5'-AGCT-3', methylates C-3 on both strands, and protects the DNA from cleavage by the AluI endonuclease. In Cellulosimicrobium cellulans (Arthrobacter luteus), this protein is Type II methyltransferase M.AluI.